The primary structure comprises 393 residues: Probable acetyl-CoA acyltransferase (393 aa).

Residue cysteine 88 is the Acyl-thioester intermediate of the active site. Catalysis depends on proton acceptor residues histidine 349 and cysteine 378.

This sequence belongs to the thiolase-like superfamily. Thiolase family.

The protein localises to the cytoplasm. It catalyses the reaction 2 acetyl-CoA = acetoacetyl-CoA + CoA. In Staphylococcus aureus (strain bovine RF122 / ET3-1), this protein is Probable acetyl-CoA acyltransferase.